Reading from the N-terminus, the 239-residue chain is 4-hydroxy-tetrahydrodipicolinate reductase (239 aa).

Residues 9 to 14 (GINGKI), 78 to 80 (GTT), and 104 to 107 (APNF) contribute to the NAD(+) site. His134 acts as the Proton donor/acceptor in catalysis. His135 lines the (S)-2,3,4,5-tetrahydrodipicolinate pocket. Lys138 functions as the Proton donor in the catalytic mechanism. 144–145 (GT) lines the (S)-2,3,4,5-tetrahydrodipicolinate pocket.

This sequence belongs to the DapB family.

It localises to the cytoplasm. It catalyses the reaction (S)-2,3,4,5-tetrahydrodipicolinate + NAD(+) + H2O = (2S,4S)-4-hydroxy-2,3,4,5-tetrahydrodipicolinate + NADH + H(+). The enzyme catalyses (S)-2,3,4,5-tetrahydrodipicolinate + NADP(+) + H2O = (2S,4S)-4-hydroxy-2,3,4,5-tetrahydrodipicolinate + NADPH + H(+). Its pathway is amino-acid biosynthesis; L-lysine biosynthesis via DAP pathway; (S)-tetrahydrodipicolinate from L-aspartate: step 4/4. Catalyzes the conversion of 4-hydroxy-tetrahydrodipicolinate (HTPA) to tetrahydrodipicolinate. This Coxiella burnetii (strain CbuG_Q212) (Coxiella burnetii (strain Q212)) protein is 4-hydroxy-tetrahydrodipicolinate reductase.